The following is a 194-amino-acid chain: Mitochondrial import inner membrane translocase subunit Tim22 (194 aa).

Disulfide bonds link Cys69-Cys141 and Cys160-Cys179. The next 3 membrane-spanning stretches (helical) occupy residues 74-94 (ALAC…TAGI), 123-143 (MSYA…ECLV), and 170-190 (AGLK…AAID).

This sequence belongs to the Tim17/Tim22/Tim23 family. In terms of assembly, component of the TIM22 complex, whose core is composed of TIMM22, associated with peripheral protein FXC1/TIMM10B and the 70 kDa heterohexamer. In most cases, the 70 kDa complex is composed of TIMM9 and TIMM10 (TIMM10A or TIMM10B). A small fraction of the 70 kDa complex is composed of TIMM8 (TIMM8A/DDP1 or TIMM8B/DDP2) and TIMM13. The TIM22 complex also contains AGK and TIMM29. Interacts directly with TIMM9, TIMM10A and FXC1/TIMM10B. Interacts (when oxidized) with TIMM29; interaction is direct. In terms of processing, disulfide bonds promote efficient assembly of the TIM22 complex.

It is found in the mitochondrion inner membrane. In terms of biological role, essential core component of the TIM22 complex, a complex that mediates the import and insertion of multi-pass transmembrane proteins into the mitochondrial inner membrane. In the TIM22 complex, it constitutes the voltage-activated and signal-gated channel. Forms a twin-pore translocase that uses the membrane potential as external driving force in 2 voltage-dependent steps. The sequence is that of Mitochondrial import inner membrane translocase subunit Tim22 (TIMM22) from Bos taurus (Bovine).